Here is a 777-residue protein sequence, read N- to C-terminus: Endonuclease MutS2 (777 aa).

Position 328 to 335 (328 to 335) interacts with ATP; it reads GPNTGGKT. A Smr domain is found at 702–777; sequence LDIRGMNTLE…GDGATEVYLK (76 aa).

The protein belongs to the DNA mismatch repair MutS family. MutS2 subfamily. Homodimer. Binds to stalled ribosomes, contacting rRNA.

Functionally, endonuclease that is involved in the suppression of homologous recombination and thus may have a key role in the control of bacterial genetic diversity. In terms of biological role, acts as a ribosome collision sensor, splitting the ribosome into its 2 subunits. Detects stalled/collided 70S ribosomes which it binds and splits by an ATP-hydrolysis driven conformational change. Acts upstream of the ribosome quality control system (RQC), a ribosome-associated complex that mediates the extraction of incompletely synthesized nascent chains from stalled ribosomes and their subsequent degradation. Probably generates substrates for RQC. In Carboxydothermus hydrogenoformans (strain ATCC BAA-161 / DSM 6008 / Z-2901), this protein is Endonuclease MutS2.